Here is a 332-residue protein sequence, read N- to C-terminus: MTLLNPNIPIRQEVKVRFDWSLEEIQEILEKPLFELLWEAQNVHRSVNPEYKVQLASLLSVKTGGCEEDCSYCSQSIYNSSDVTNQSDFDVKGVLEQAKAAKAAGADRFCMGWAWREIRDGKPFEAMLDMVRGVKELGLEACVTGGMLTNQQAARLAEVGLNAYNHNLDTSPEHYDKIISTRTYQDRLETLHRVRNAGITICCGGIIGMGETLKDRASLLRVLANMDPHPESVPINALVPVEGTPLENLSMVDPLEMVRMVATARILMPRSRVRLSAGREQLGKEAQILCLLAGADSIFYGDTLLTTSNPSIKADRELLASAGVSVNWDLYD.

The 229-residue stretch at 51–279 folds into the Radical SAM core domain; it reads YKVQLASLLS…RSRVRLSAGR (229 aa). [4Fe-4S] cluster is bound by residues C66, C70, and C73. [2Fe-2S] cluster-binding residues include C110, C142, C202, and R274.

Belongs to the radical SAM superfamily. Biotin synthase family. Homodimer. [4Fe-4S] cluster serves as cofactor. It depends on [2Fe-2S] cluster as a cofactor.

The catalysed reaction is (4R,5S)-dethiobiotin + (sulfur carrier)-SH + 2 reduced [2Fe-2S]-[ferredoxin] + 2 S-adenosyl-L-methionine = (sulfur carrier)-H + biotin + 2 5'-deoxyadenosine + 2 L-methionine + 2 oxidized [2Fe-2S]-[ferredoxin]. It functions in the pathway cofactor biosynthesis; biotin biosynthesis; biotin from 7,8-diaminononanoate: step 2/2. Catalyzes the conversion of dethiobiotin (DTB) to biotin by the insertion of a sulfur atom into dethiobiotin via a radical-based mechanism. In Prochlorococcus marinus (strain SARG / CCMP1375 / SS120), this protein is Biotin synthase.